The sequence spans 702 residues: Phosphoglycerol transferase I (702 aa).

Transmembrane regions (helical) follow at residues 5 to 24 (LLVSLLLLLWLLVASPRLAW), 73 to 95 (GYIAVFVGMLLLSLSPLLLVRIR), and 102 to 124 (GGGAVFAGFVGMLLVGIAASPLY).

This sequence belongs to the OpgB family.

It is found in the cell inner membrane. The catalysed reaction is a phosphatidylglycerol + a membrane-derived-oligosaccharide D-glucose = a 1,2-diacyl-sn-glycerol + a membrane-derived-oligosaccharide 6-(glycerophospho)-D-glucose.. The protein operates within glycan metabolism; osmoregulated periplasmic glucan (OPG) biosynthesis. In terms of biological role, transfers a phosphoglycerol residue from phosphatidylglycerol to the membrane-bound nascent glucan backbones. This Xanthomonas axonopodis pv. citri (strain 306) protein is Phosphoglycerol transferase I.